The chain runs to 154 residues: Putative pre-16S rRNA nuclease (154 aa).

Belongs to the YqgF nuclease family.

Its subcellular location is the cytoplasm. Its function is as follows. Could be a nuclease involved in processing of the 5'-end of pre-16S rRNA. This Rickettsia felis (strain ATCC VR-1525 / URRWXCal2) (Rickettsia azadi) protein is Putative pre-16S rRNA nuclease.